The chain runs to 381 residues: 1-deoxy-D-xylulose 5-phosphate reductoisomerase (381 aa).

T11, G12, S13, I14, K36, N37, and N121 together coordinate NADPH. Position 122 (K122) interacts with 1-deoxy-D-xylulose 5-phosphate. Residue E123 participates in NADPH binding. D147 is a binding site for Mn(2+). 4 residues coordinate 1-deoxy-D-xylulose 5-phosphate: S148, E149, S173, and H196. E149 lines the Mn(2+) pocket. G202 serves as a coordination point for NADPH. Residues S209, N214, K215, and E218 each contribute to the 1-deoxy-D-xylulose 5-phosphate site. Residue E218 coordinates Mn(2+).

Belongs to the DXR family. It depends on Mg(2+) as a cofactor. The cofactor is Mn(2+).

The enzyme catalyses 2-C-methyl-D-erythritol 4-phosphate + NADP(+) = 1-deoxy-D-xylulose 5-phosphate + NADPH + H(+). It functions in the pathway isoprenoid biosynthesis; isopentenyl diphosphate biosynthesis via DXP pathway; isopentenyl diphosphate from 1-deoxy-D-xylulose 5-phosphate: step 1/6. Catalyzes the NADPH-dependent rearrangement and reduction of 1-deoxy-D-xylulose-5-phosphate (DXP) to 2-C-methyl-D-erythritol 4-phosphate (MEP). This Acetivibrio thermocellus (strain ATCC 27405 / DSM 1237 / JCM 9322 / NBRC 103400 / NCIMB 10682 / NRRL B-4536 / VPI 7372) (Clostridium thermocellum) protein is 1-deoxy-D-xylulose 5-phosphate reductoisomerase.